The sequence spans 743 residues: Pentatricopeptide repeat-containing protein At2g16880 (743 aa).

16 PPR repeats span residues 130–164 (SKALFDIALSAYLHEGKPHVALQIFQKMIRLKLKP), 165–202 (NLLTCNTLLIGLVRYPSSFSISSAREVFDDMVKIGVSL), 203–233 (NVQTFNVLVNGYCLEGKLEDALGMLERMVSE), 239–273 (DNVTYNTILKAMSKKGRLSDLKELLLDMKKNGLVP), 274–308 (NRVTYNNLVYGYCKLGSLKEAFQIVELMKQTNVLP), 309–343 (DLCTYNILINGLCNAGSMREGLELMDAMKSLKLQP), 344–378 (DVVTYNTLIDGCFELGLSLEARKLMEQMENDGVKA), 379–414 (NQVTHNISLKWLCKEEKREAVTRKVKELVDMHGFSP), 415–449 (DIVTYHTLIKAYLKVGDLSGALEMMREMGQKGIKM), 450–484 (NTITLNTILDALCKERKLDEAHNLLNSAHKRGFIV), 485–519 (DEVTYGTLIMGFFREEKVEKALEMWDEMKKVKITP), 520–554 (TVSTFNSLIGGLCHHGKTELAMEKFDELAESGLLP), 555–589 (DDSTFNSIILGYCKEGRVEKAFEFYNESIKHSFKP), 590–620 (DNYTCNILLNGLCKEGMTEKALNFFNTLIEE), 624–658 (DTVTYNTMISAFCKDKKLKEAYDLLSEMEEKGLEP), and 659–689 (DRFTYNSFISLLMEDGKLSETDELLKKFSGK).

This sequence belongs to the PPR family. P subfamily.

The polypeptide is Pentatricopeptide repeat-containing protein At2g16880 (Arabidopsis thaliana (Mouse-ear cress)).